The chain runs to 388 residues: Succinate--CoA ligase [ADP-forming] subunit beta (388 aa).

Residues Lys46, 53–55 (GRG), Glu99, Cys102, and Glu107 each bind ATP. The Mg(2+) site is built by Asn199 and Asp213. Substrate-binding positions include Asn264 and 321–323 (GIV).

This sequence belongs to the succinate/malate CoA ligase beta subunit family. As to quaternary structure, heterotetramer of two alpha and two beta subunits. Mg(2+) serves as cofactor.

It carries out the reaction succinate + ATP + CoA = succinyl-CoA + ADP + phosphate. It catalyses the reaction GTP + succinate + CoA = succinyl-CoA + GDP + phosphate. The protein operates within carbohydrate metabolism; tricarboxylic acid cycle; succinate from succinyl-CoA (ligase route): step 1/1. In terms of biological role, succinyl-CoA synthetase functions in the citric acid cycle (TCA), coupling the hydrolysis of succinyl-CoA to the synthesis of either ATP or GTP and thus represents the only step of substrate-level phosphorylation in the TCA. The beta subunit provides nucleotide specificity of the enzyme and binds the substrate succinate, while the binding sites for coenzyme A and phosphate are found in the alpha subunit. This is Succinate--CoA ligase [ADP-forming] subunit beta from Actinobacillus pleuropneumoniae serotype 5b (strain L20).